Here is a 521-residue protein sequence, read N- to C-terminus: MKRGKKNSDAGDRLTNSDTRTGSSELNAMMKPSLSSMKTMGLLLAVLMVASVMFSLSVVLRDPPSDDVIETEAASRVLQSRLHQDGGLSEKKAQLGNINLVPSFDKESCLSRYEASLYRKESPFKQSSYLDYRLQRYEDLHRRCGPFTRSYNLTLDKLKSGDRSDGEVSGCRYVIWLNSNGDLGNRMLSLASAFLYALLTNRFLLVELGVDMADLFCEPFPNTTWFLPPEFPLNSHFNEQSLLRNSGNPMVAYRHVVRDSSDQQKLFFCEDSQVLLEETPWLILKADSFFLPSLFSVSSFKQELQMLFPEKDTAFHFLSQYLFHPTNVVWGLITRYYNAYLAKADQRIGIYIGVSESGNEQFQHLIDQILACGTRHKLLPEVDKQRNLPSSQVLNRKSKAVFISSSSPGYFKSIRDVYWENPTVMGEIISVHKPSYKDYQKTPRNMESKRAWAEIYLLSCSDALVVTGLWSSLVEVAHGLGGLKPWVLNKAENGTAHEPYCVKARSIEPCSQATLFHGCKD.

Residues 1–12 (MKRGKKNSDAGD) are compositionally biased toward basic and acidic residues. The segment at 1–29 (MKRGKKNSDAGDRLTNSDTRTGSSELNAM) is disordered. The Cytoplasmic segment spans residues 1-39 (MKRGKKNSDAGDRLTNSDTRTGSSELNAMMKPSLSSMKT). Over residues 14-26 (LTNSDTRTGSSEL) the composition is skewed to polar residues. A helical; Signal-anchor for type II membrane protein membrane pass occupies residues 40–60 (MGLLLAVLMVASVMFSLSVVL). The Lumenal segment spans residues 61-521 (RDPPSDDVIE…QATLFHGCKD (461 aa)). Asn-152, Asn-222, and Asn-493 each carry an N-linked (GlcNAc...) asparagine glycan.

The protein belongs to the glycosyltransferase 37 family. As to expression, expressed in roots, stems, leaves, flowers, siliques and seedlings.

It is found in the golgi apparatus. It localises to the golgi stack membrane. The protein operates within protein modification; protein glycosylation. Its function is as follows. May be involved in cell wall biosynthesis. May act as a fucosyltransferase. This is Fucosyltransferase 3 (FUT3) from Arabidopsis thaliana (Mouse-ear cress).